Reading from the N-terminus, the 216-residue chain is ATP phosphoribosyltransferase (216 aa).

It belongs to the ATP phosphoribosyltransferase family. Short subfamily. Heteromultimer composed of HisG and HisZ subunits.

The protein localises to the cytoplasm. The enzyme catalyses 1-(5-phospho-beta-D-ribosyl)-ATP + diphosphate = 5-phospho-alpha-D-ribose 1-diphosphate + ATP. It functions in the pathway amino-acid biosynthesis; L-histidine biosynthesis; L-histidine from 5-phospho-alpha-D-ribose 1-diphosphate: step 1/9. Catalyzes the condensation of ATP and 5-phosphoribose 1-diphosphate to form N'-(5'-phosphoribosyl)-ATP (PR-ATP). Has a crucial role in the pathway because the rate of histidine biosynthesis seems to be controlled primarily by regulation of HisG enzymatic activity. The polypeptide is ATP phosphoribosyltransferase (Nitrosomonas europaea (strain ATCC 19718 / CIP 103999 / KCTC 2705 / NBRC 14298)).